A 1157-amino-acid polypeptide reads, in one-letter code: ATP-dependent helicase/deoxyribonuclease subunit B (1157 aa).

Positions 1 to 278 constitute a UvrD-like helicase ATP-binding domain; the sequence is MTLQIIAGRS…FFLENKRAKT (278 aa). 8-15 lines the ATP pocket; sequence GRSGTGKT. The UvrD-like helicase C-terminal domain maps to 272–590; that stretch reads ENKRAKTESL…VLSDMENAKL (319 aa). The [4Fe-4S] cluster site is built by cysteine 794, cysteine 1115, cysteine 1118, and cysteine 1124.

The protein belongs to the helicase family. AddB/RexB type 1 subfamily. Heterodimer of AddA and AddB. It depends on Mg(2+) as a cofactor. Requires [4Fe-4S] cluster as cofactor.

Functionally, the heterodimer acts as both an ATP-dependent DNA helicase and an ATP-dependent, dual-direction single-stranded exonuclease. Recognizes the chi site generating a DNA molecule suitable for the initiation of homologous recombination. The AddB subunit has 5' -&gt; 3' nuclease activity but not helicase activity. In Listeria monocytogenes serotype 4a (strain HCC23), this protein is ATP-dependent helicase/deoxyribonuclease subunit B.